A 698-amino-acid polypeptide reads, in one-letter code: Colicin V secretion/processing ATP-binding protein CvaB (698 aa).

The 120-residue stretch at Gln-26 to Val-145 folds into the Peptidase C39 domain. Cys-32 is an active-site residue. 7 consecutive transmembrane segments (helical) span residues Gly-33–Leu-53, Val-92–Val-112, Leu-176–Gly-196, Gly-211–Ser-231, Thr-289–Tyr-311, Leu-315–Tyr-334, and Ile-412–Phe-432. The 283-residue stretch at Leu-176–Ile-458 folds into the ABC transmembrane type-1 domain. The 207-residue stretch at Leu-492–Ile-698 folds into the ABC transporter domain. Gly-526 to Thr-533 lines the ATP pocket.

This sequence belongs to the ABC transporter superfamily. Colicin V exporter (TC 3.A.1.110.2) family.

It localises to the cell membrane. Functionally, involved, in conjunction with CvaA, in the secretion of colicin V. The sequence is that of Colicin V secretion/processing ATP-binding protein CvaB (cvaB) from Escherichia coli.